Here is a 180-residue protein sequence, read N- to C-terminus: Large ribosomal subunit protein uL5 (180 aa).

It belongs to the universal ribosomal protein uL5 family. In terms of assembly, part of the 50S ribosomal subunit; part of the 5S rRNA/L5/L18/L25 subcomplex. Contacts the 5S rRNA and the P site tRNA. Forms a bridge to the 30S subunit in the 70S ribosome.

This is one of the proteins that bind and probably mediate the attachment of the 5S RNA into the large ribosomal subunit, where it forms part of the central protuberance. In the 70S ribosome it contacts protein S13 of the 30S subunit (bridge B1b), connecting the 2 subunits; this bridge is implicated in subunit movement. Contacts the P site tRNA; the 5S rRNA and some of its associated proteins might help stabilize positioning of ribosome-bound tRNAs. The chain is Large ribosomal subunit protein uL5 from Symbiobacterium thermophilum (strain DSM 24528 / JCM 14929 / IAM 14863 / T).